A 340-amino-acid chain; its full sequence is MLYPLIRKGIFALEPETAHNLAIKALHIAGNPWLNRALKALLGCPQGTEKTVMGIKFKNPIGLAAGADKNGEAIDGFGAMGFGFIEVGTVTPLAQDGNAKPRQFRIVEAEGIINRNGFNNYGIDHLIENVNKSHYDGTLGINIGKNKITPIEQGKDDYIFCLNKAYNYAHYITVNISSPNTPDLRTLQYGDALDDLLKSIKERQKILAEQYNKYVPIALKIAPDLTEAELVQIADTVRRHQMDGVIATNTTISRDTVQGMKNAAEIGGLSGKPLQHKSTEIIRRLHRELKGDIPIIGSGGIDGVQNAQEKIAAGAELLQIYSGLIYHGPALVKTLVQTIK.

Residues 65–69 (AGADK) and threonine 89 each bind FMN. Lysine 69 contacts substrate. A substrate-binding site is contributed by 114 to 118 (NRNGF). FMN contacts are provided by asparagine 142 and asparagine 175. A substrate-binding site is contributed by asparagine 175. The active-site Nucleophile is serine 178. Position 180 (asparagine 180) interacts with substrate. Residues lysine 220 and threonine 248 each coordinate FMN. 249–250 (NT) provides a ligand contact to substrate. FMN is bound by residues glycine 271, glycine 300, and 321 to 322 (YS).

Belongs to the dihydroorotate dehydrogenase family. Type 2 subfamily. As to quaternary structure, monomer. FMN is required as a cofactor.

The protein localises to the cell membrane. The enzyme catalyses (S)-dihydroorotate + a quinone = orotate + a quinol. The protein operates within pyrimidine metabolism; UMP biosynthesis via de novo pathway; orotate from (S)-dihydroorotate (quinone route): step 1/1. Catalyzes the conversion of dihydroorotate to orotate with quinone as electron acceptor. This Actinobacillus succinogenes (strain ATCC 55618 / DSM 22257 / CCUG 43843 / 130Z) protein is Dihydroorotate dehydrogenase (quinone).